The chain runs to 65 residues: Small hydrophobic protein (65 aa).

Over 1–20 (MGNTSITIEFTSKFWPYFTL) the chain is Intravirion. The interaction with host BCAP31 stretch occupies residues 6-15 (ITIEFTSKFW). The helical; Signal-anchor for type II membrane protein transmembrane segment at 21 to 44 (IHMILTPISLLIIITIMIAILNKL) threads the bilayer. The segment at 38–43 (IAILNK) is interaction with small-molecule inhibitor. Over 45 to 65 (SEHKTFCNKTLELGQMYQINT) the chain is Virion surface. Asparagine 52 carries an N-linked (GlcNAc...) asparagine; by host glycan.

Belongs to the orthopneumovirus small hydrophobic protein family. In terms of assembly, homopentamer forming a funnel-like pore. Interacts with glycoprotein G; this interaction occurs on the surface of virion particles and infected cells. Interacts with host BCAP31 (via C-terminus); this interaction is direct. Four species of SH have been detected in infected cell cytoplasm: a 7.5 kDa non-glycosylated form (SH0), a 13-15 kDa form that contains one or two N-linked carbohydrate side chains of the high-mannose type (SHg), a 21-30 kDa polylactosaminoglycan-modified form of the protein (SHp), and the isoform generated by alternative translational initiation. Of these different forms, SH0 is by far the most abundant protein detected during virus infection. In terms of processing, tyrosine phosphorylated.

It is found in the virion membrane. The protein localises to the host cell membrane. It localises to the host Golgi apparatus membrane. Its subcellular location is the host endoplasmic reticulum membrane. With respect to regulation, channel activity is inhibited by copper. Also inhibited by small-molecule pyronin B. Its function is as follows. Viroporin that forms a homopentameric ion channel displaying low ion selectivity. May play a role in virus morphogenesis and pathogenicity at various stages of the viral life cycle. Accumulates at the membrane of the Golgi apparatus in infected cells and may facilitate virus release by modifying the secretory pathway. May enhance host membrane permeability and disrupt cellular ion homeostasis, which can be sensed as damage-associated molecular patterns/danger signals, triggering NLRP3 inflammasome activation and inflammatory immune response. Also inhibits host TNFA-mediated signaling pathway and may delay apoptosis, allowing time for the virus to replicate. The polypeptide is Small hydrophobic protein (Human respiratory syncytial virus B (strain 18537)).